The primary structure comprises 116 residues: Small ribosomal subunit protein bS16 (116 aa).

Positions 88–116 (RNNPKAAVPGKRMAELAKKKADRAAASAE) are disordered. The span at 99 to 110 (RMAELAKKKADR) shows a compositional bias: basic and acidic residues.

The protein belongs to the bacterial ribosomal protein bS16 family.

The protein is Small ribosomal subunit protein bS16 of Cereibacter sphaeroides (strain ATCC 17029 / ATH 2.4.9) (Rhodobacter sphaeroides).